A 235-amino-acid chain; its full sequence is Orotidine 5'-phosphate decarboxylase (235 aa).

Residues Asp12, Lys34, 61 to 70, Thr116, Arg177, Gln186, Gly206, and Arg207 contribute to the substrate site; that span reads DMKLLDIDNT. Lys63 acts as the Proton donor in catalysis.

This sequence belongs to the OMP decarboxylase family. Type 1 subfamily. In terms of assembly, homodimer.

It catalyses the reaction orotidine 5'-phosphate + H(+) = UMP + CO2. Its pathway is pyrimidine metabolism; UMP biosynthesis via de novo pathway; UMP from orotate: step 2/2. Catalyzes the decarboxylation of orotidine 5'-monophosphate (OMP) to uridine 5'-monophosphate (UMP). The protein is Orotidine 5'-phosphate decarboxylase of Rhizobium johnstonii (strain DSM 114642 / LMG 32736 / 3841) (Rhizobium leguminosarum bv. viciae).